Here is a 530-residue protein sequence, read N- to C-terminus: uncharacterized protein (530 aa).

5 helical membrane-spanning segments follow: residues 4–23, 28–47, 57–79, 91–113, and 148–170; these read FLAA…GLAI, LFGV…VVST, FVFQ…PAFF, LFMI…AFGL, and VIGY…AVGA. Residues 260–344 form the RCK C-terminal domain; that stretch reads LGGECDTKIE…MGEVRRFLGD (85 aa). Helical transmembrane passes span 352-374, 379-398, 419-441, and 451-473; these read VNLL…PVPL, TMYL…LGAL, LGLA…QALT, and VGFA…LLKL.

This sequence belongs to the AAE transporter (TC 2.A.81) family.

It localises to the cell membrane. This is an uncharacterized protein from Corynebacterium efficiens (strain DSM 44549 / YS-314 / AJ 12310 / JCM 11189 / NBRC 100395).